The following is a 367-amino-acid chain: MSSNSFGKLFTVTTFGESHGPAIGCVIDGCPPGLALDAAEFGHDLQRRATGKSRHTSARREADEVEILSGVYEGLTTGTPIALLIRNTDQRSKDYANIGQQFRPGHADYSYWHKYGIRDPRGGGRSSARETTMRVAAGVVAKKWLAERFGVTVRGYLSQLGDITPAGFDWSAVEDNPFFWPHAAQVPELEAYMDALRKSGDSVGARVDVVADNVPPGWGEPIYGKLDGELAAALMSINAVKGVEIGDGFASAAQKGTEHRDLLTPQGFASNHAGGILGGISTGQPVVASMVLKPTSSLRLPGPSLDTAGNVVEVVTTGRHDPCVGIRATPIAEAMVAMVLMDQALRHRAQCGDVGTITPRIPGQIDG.

Residues R48 and R54 each contribute to the NADP(+) site. FMN is bound by residues 125–127 (RSS), 238–239 (NA), G278, 293–297 (KPTSS), and R319.

This sequence belongs to the chorismate synthase family. As to quaternary structure, homotetramer. The cofactor is FMNH2.

The catalysed reaction is 5-O-(1-carboxyvinyl)-3-phosphoshikimate = chorismate + phosphate. The protein operates within metabolic intermediate biosynthesis; chorismate biosynthesis; chorismate from D-erythrose 4-phosphate and phosphoenolpyruvate: step 7/7. Functionally, catalyzes the anti-1,4-elimination of the C-3 phosphate and the C-6 proR hydrogen from 5-enolpyruvylshikimate-3-phosphate (EPSP) to yield chorismate, which is the branch point compound that serves as the starting substrate for the three terminal pathways of aromatic amino acid biosynthesis. This reaction introduces a second double bond into the aromatic ring system. This Stenotrophomonas maltophilia (strain K279a) protein is Chorismate synthase.